The following is a 182-amino-acid chain: UPF0149 protein HI_0817 (182 aa).

It belongs to the UPF0149 family.

The sequence is that of UPF0149 protein HI_0817 from Haemophilus influenzae (strain ATCC 51907 / DSM 11121 / KW20 / Rd).